The chain runs to 357 residues: Embryonic growth/differentiation factor 1 (357 aa).

The N-terminal stretch at 1 to 23 (MLPVCHRFCDHLLLLLLLPSTTL) is a signal peptide. Positions 24 to 237 (APAPASMGPA…RLCPLPRLRR (214 aa)) are excised as a propeptide. An N-linked (GlcNAc...) asparagine glycan is attached at Asn-191. Intrachain disulfides connect Cys-251–Cys-322, Cys-280–Cys-354, and Cys-284–Cys-356.

This sequence belongs to the TGF-beta family. As to quaternary structure, homodimer; disulfide-linked. Expressed almost exclusively in the nervous system.

It localises to the secreted. In terms of biological role, may mediate cell differentiation events during embryonic development. This is Embryonic growth/differentiation factor 1 (Gdf1) from Mus musculus (Mouse).